The sequence spans 487 residues: L-tartrate/succinate antiporter (487 aa).

14 helical membrane-spanning segments follow: residues 10 to 30, 33 to 53, 54 to 74, 93 to 113, 137 to 157, 189 to 209, 236 to 256, 292 to 312, 313 to 333, 340 to 360, 370 to 390, 393 to 413, 418 to 438, and 465 to 485; these read YLAPLAVIAIIALLPVPAGLE, TWLYFAVFTGVIVGLILEPVP, GAVVAMVGISIIAILSPWLLF, WAVSGFSNSVIWLIFAAFMFG, TLFLGYAVMFSELILAPVTPS, IGSYIMWMGIVADCVTSAIFL, FLGMLPLSILLVLLVPWLAYV, LMVGALVLWIFGGDYIDAAMV, GYSVVALMLLLRIISWDDIVS, VFFWLASLITLATGLNNTGFI, SLSGYSPTMVMVTLIVVFYLL, FFASATAYTCALAPMMIAAAL, IPLPVFCLMVGAAIGLGSILT, and IFGLIFLVLLVITGLLWMPVV.

Belongs to the SLC13A/DASS transporter (TC 2.A.47) family. DIT1 subfamily.

Its subcellular location is the cell inner membrane. The catalysed reaction is (2R,3R)-tartrate(out) + succinate(in) = (2R,3R)-tartrate(in) + succinate(out). Functionally, catalyzes the uptake of tartrate in exchange for intracellular succinate. Essential for anaerobic L-tartrate fermentation. The chain is L-tartrate/succinate antiporter (ttdT) from Shigella flexneri.